Reading from the N-terminus, the 294-residue chain is Protoheme IX farnesyltransferase (294 aa).

Transmembrane regions (helical) follow at residues 24–44 (VVLLMLLTVIVGMYLAAPGWV), 48–68 (LIAFTLLGIGLCAGSAAAINH), 96–116 (ALWFAVIIGLMGLSLLILFVN), 118–138 (LTALLTFITLIGYAGVYTGYL), 145–165 (NIVIGGLAGAAPPLLGWTAVT), 172–192 (ALLLVLIIFTWTPPHFWALAI), 211–231 (GIQFTKLNIYLYTVLLLVVSL), 241–263 (WIYLLGALILGIRFLVWAHKLYF), and 268–288 (VVAMQTFRFSILYLMLLFVFL).

This sequence belongs to the UbiA prenyltransferase family. Protoheme IX farnesyltransferase subfamily.

Its subcellular location is the cell inner membrane. The enzyme catalyses heme b + (2E,6E)-farnesyl diphosphate + H2O = Fe(II)-heme o + diphosphate. Its pathway is porphyrin-containing compound metabolism; heme O biosynthesis; heme O from protoheme: step 1/1. Functionally, converts heme B (protoheme IX) to heme O by substitution of the vinyl group on carbon 2 of heme B porphyrin ring with a hydroxyethyl farnesyl side group. This Legionella pneumophila (strain Lens) protein is Protoheme IX farnesyltransferase.